Here is a 584-residue protein sequence, read N- to C-terminus: HERV-H_2q24.3 provirus ancestral Env polyprotein (584 aa).

The signal sequence occupies residues 1-35; that stretch reads MIFAGKAPSNTSTLMKFYSLLLYSLLFSFPFLCHP. At 36–523 the chain is on the extracellular side; it reads LPLPSYLHHT…WALSNWMSWV (488 aa). An N-linked (GlcNAc...) asparagine glycan is attached at Asn47. The CXXC signature appears at 64–67; the sequence is CWLC. N-linked (GlcNAc...) asparagine glycosylation is found at Asn199, Asn222, Asn265, Asn283, Asn352, and Asn370. The fusion peptide stretch occupies residues 388-408; that stretch reads VIPLIPLMVGLGLSASTVALG. A CKS-17 motif is present at residues 454–470; the sequence is LQNRRGLDLLTAEKGGL. A disulfide bridge links Cys471 with Cys478. Positions 471 to 479 match the CX6CC motif; that stretch reads CIFLNEECC. N-linked (GlcNAc...) asparagine glycosylation occurs at Asn483. Residues 524–544 traverse the membrane as a helical segment; that stretch reads LPIVSPLIPIFLLLLFGPCIF. The Cytoplasmic segment spans residues 545 to 584; that stretch reads RLVSQFIQNRIQAITNHSIRQMFLLTSPQYHPLPQDLPSA.

The protein belongs to the gamma type-C retroviral envelope protein family. HERV class-I H env subfamily. In terms of assembly, the surface (SU) and transmembrane (TM) proteins form a heterodimer. SU and TM are attached by noncovalent interactions or by a labile interchain disulfide bond. Post-translationally, specific enzymatic cleavages in vivo yield the mature SU and TM proteins. The CXXC motif is highly conserved across a broad range of retroviral envelope proteins. It is thought to participate in the formation of a labile disulfide bond possibly with the CX6CC motif present in the transmembrane protein. Isomerization of the intersubunit disulfide bond to an SU intrachain disulfide bond is thought to occur upon receptor recognition in order to allow membrane fusion. As to expression, low expression in skin and testis. No expression in several cell lines.

The protein resides in the virion. The protein localises to the cell membrane. Functionally, retroviral envelope proteins mediate receptor recognition and membrane fusion during early infection. Endogenous envelope proteins may have kept, lost or modified their original function during evolution. This endogenous envelope protein has lost its original fusogenic properties but has immunosuppressive properties in vivo. SU mediates receptor recognition. In terms of biological role, TM anchors the envelope heterodimer to the viral membrane through one transmembrane domain. The other hydrophobic domain, called fusion peptide, mediates fusion of the viral membrane with the target cell membrane. This Homo sapiens (Human) protein is HERV-H_2q24.3 provirus ancestral Env polyprotein.